Consider the following 156-residue polypeptide: MSRRGTAEKRTAKSDPIFRNRLVNMVVNRIMKDGKKSLAYQILYRAVKKIQQKTETNPLLVLRQAIRRVTPNIGVKTRRNKKGSTRKVPIEIGSKQGRALAIRWLLEASQKRPGRNMAFKLSSELVDAAKGSGGAIRKKEATHRMAEANRALAHFR.

Belongs to the universal ribosomal protein uS7 family. In terms of assembly, part of the 30S ribosomal subunit.

Its subcellular location is the plastid. The protein localises to the chloroplast. Functionally, one of the primary rRNA binding proteins, it binds directly to 16S rRNA where it nucleates assembly of the head domain of the 30S subunit. In Saccharum hybrid (Sugarcane), this protein is Small ribosomal subunit protein uS7cz/uS7cy (rps7-A).